The primary structure comprises 714 residues: Penicillin-binding protein 1F (714 aa).

Residues 1–12 lie on the Cytoplasmic side of the membrane; the sequence is MFKIKKKKLFIP. The helical; Signal-anchor for type II membrane protein transmembrane segment at 13-33 threads the bilayer; sequence IIILVLTAFLALIGYISIIFL. Residues 34-714 lie on the Extracellular side of the membrane; that stretch reads GHYVIDEKKL…DYVQPKLFSS (681 aa). Positions 49-217 are transglycosylase; it reads SKIVDQNGDE…STYSPILHPD (169 aa). E87 acts as the Proton donor; for transglycosylase activity in catalysis. The transpeptidase stretch occupies residues 297 to 592; sequence SKLQKTAYQV…SSYPTRLFKD (296 aa). Catalysis depends on S359, which acts as the Acyl-ester intermediate; for transpeptidase activity.

The protein in the N-terminal section; belongs to the glycosyltransferase 51 family. This sequence in the C-terminal section; belongs to the transpeptidase family.

Its subcellular location is the cell membrane. The enzyme catalyses [GlcNAc-(1-&gt;4)-Mur2Ac(oyl-L-Ala-gamma-D-Glu-L-Lys-D-Ala-D-Ala)](n)-di-trans,octa-cis-undecaprenyl diphosphate + beta-D-GlcNAc-(1-&gt;4)-Mur2Ac(oyl-L-Ala-gamma-D-Glu-L-Lys-D-Ala-D-Ala)-di-trans,octa-cis-undecaprenyl diphosphate = [GlcNAc-(1-&gt;4)-Mur2Ac(oyl-L-Ala-gamma-D-Glu-L-Lys-D-Ala-D-Ala)](n+1)-di-trans,octa-cis-undecaprenyl diphosphate + di-trans,octa-cis-undecaprenyl diphosphate + H(+). The catalysed reaction is Preferential cleavage: (Ac)2-L-Lys-D-Ala-|-D-Ala. Also transpeptidation of peptidyl-alanyl moieties that are N-acyl substituents of D-alanine.. It participates in cell wall biogenesis; peptidoglycan biosynthesis. In terms of biological role, cell wall formation. May be involved in outgrowth of the germinated spore or it could function in the synthesis of the germ cell wall. The protein is Penicillin-binding protein 1F (pbpF) of Bacillus subtilis (strain 168).